Here is a 345-residue protein sequence, read N- to C-terminus: Cell division control protein 2 homolog 2 (345 aa).

The disordered stretch occupies residues 1-44; it reads MQVQVQEGQTACDGSLRPLPSAGPASFVPRSLRPAPLRGTSTPD. The region spanning 46 to 328 is the Protein kinase domain; the sequence is YSRIEKVGEG…AYEALQHSYF (283 aa). ATP contacts are provided by residues 52–60 and Lys-75; that span reads VGEGSYGIV. Ser-56 bears the Phosphoserine mark. Tyr-57 bears the Phosphotyrosine mark. Asp-168 serves as the catalytic Proton acceptor.

The protein belongs to the protein kinase superfamily. CMGC Ser/Thr protein kinase family. CDC2/CDKX subfamily. In terms of assembly, forms a stable but non-covalent complex with a regulatory subunit and with a cyclin.

The catalysed reaction is L-seryl-[protein] + ATP = O-phospho-L-seryl-[protein] + ADP + H(+). It catalyses the reaction L-threonyl-[protein] + ATP = O-phospho-L-threonyl-[protein] + ADP + H(+). Phosphorylation at Ser-56 or Tyr-57 inactivates the enzyme. In terms of biological role, probably involved in the control of the cell cycle. The polypeptide is Cell division control protein 2 homolog 2 (CRK2) (Trypanosoma brucei brucei).